Reading from the N-terminus, the 160-residue chain is Ubiquitin-conjugating enzyme E2 16 (160 aa).

Residues 3–153 (SSIKRLHKEY…VRCTTYLYAK (151 aa)) enclose the UBC core domain. The Glycyl thioester intermediate role is filled by Cys90.

The protein belongs to the ubiquitin-conjugating enzyme family.

The catalysed reaction is S-ubiquitinyl-[E1 ubiquitin-activating enzyme]-L-cysteine + [E2 ubiquitin-conjugating enzyme]-L-cysteine = [E1 ubiquitin-activating enzyme]-L-cysteine + S-ubiquitinyl-[E2 ubiquitin-conjugating enzyme]-L-cysteine.. The protein operates within protein modification; protein ubiquitination. Functionally, catalyzes the covalent attachment of ubiquitin to other proteins. This Schizosaccharomyces pombe (strain 972 / ATCC 24843) (Fission yeast) protein is Ubiquitin-conjugating enzyme E2 16 (ubc16).